The following is a 600-amino-acid chain: KIF-binding protein (600 aa).

A coiled-coil region spans residues 384–434 (KAENEATEYSKIMQDYAEAYEHIAFFEENPENQAKMQKRRAKYLEDLLDLL).

The protein belongs to the KIF-binding protein family.

It localises to the cytoplasm. Its subcellular location is the cytoskeleton. The sequence is that of KIF-binding protein from Drosophila melanogaster (Fruit fly).